The following is a 222-amino-acid chain: Probable transaldolase (222 aa).

The active-site Schiff-base intermediate with substrate is the lysine 91.

This sequence belongs to the transaldolase family. Type 3B subfamily.

The protein resides in the cytoplasm. The catalysed reaction is D-sedoheptulose 7-phosphate + D-glyceraldehyde 3-phosphate = D-erythrose 4-phosphate + beta-D-fructose 6-phosphate. Its pathway is carbohydrate degradation; pentose phosphate pathway; D-glyceraldehyde 3-phosphate and beta-D-fructose 6-phosphate from D-ribose 5-phosphate and D-xylulose 5-phosphate (non-oxidative stage): step 2/3. Its function is as follows. Transaldolase is important for the balance of metabolites in the pentose-phosphate pathway. The protein is Probable transaldolase of Chlorobium limicola (strain DSM 245 / NBRC 103803 / 6330).